The sequence spans 545 residues: CTP synthase (545 aa).

The tract at residues 1–266 (MATNYIFVTG…DTFVCDRFRL (266 aa)) is amidoligase domain. Position 14 (S14) interacts with CTP. UTP is bound at residue S14. ATP is bound by residues 15-20 (SLGKGI) and D72. Mg(2+)-binding residues include D72 and E140. CTP is bound by residues 147 to 149 (DIE), 187 to 192 (KTKPTQ), and K223. Residues 187-192 (KTKPTQ) and K223 each bind UTP. 239–241 (KDV) lines the ATP pocket. A Glutamine amidotransferase type-1 domain is found at 291–542 (TIGMVGKYVE…VAAAKAYQDS (252 aa)). G352 contributes to the L-glutamine binding site. Residue C379 is the Nucleophile; for glutamine hydrolysis of the active site. L-glutamine contacts are provided by residues 380–383 (LGMQ), E403, and R470. Catalysis depends on residues H515 and E517.

The protein belongs to the CTP synthase family. Homotetramer.

It catalyses the reaction UTP + L-glutamine + ATP + H2O = CTP + L-glutamate + ADP + phosphate + 2 H(+). The enzyme catalyses L-glutamine + H2O = L-glutamate + NH4(+). It carries out the reaction UTP + NH4(+) + ATP = CTP + ADP + phosphate + 2 H(+). It functions in the pathway pyrimidine metabolism; CTP biosynthesis via de novo pathway; CTP from UDP: step 2/2. Its activity is regulated as follows. Allosterically activated by GTP, when glutamine is the substrate; GTP has no effect on the reaction when ammonia is the substrate. The allosteric effector GTP functions by stabilizing the protein conformation that binds the tetrahedral intermediate(s) formed during glutamine hydrolysis. Inhibited by the product CTP, via allosteric rather than competitive inhibition. Catalyzes the ATP-dependent amination of UTP to CTP with either L-glutamine or ammonia as the source of nitrogen. Regulates intracellular CTP levels through interactions with the four ribonucleotide triphosphates. The chain is CTP synthase from Actinobacillus pleuropneumoniae serotype 5b (strain L20).